Consider the following 471-residue polypeptide: NADH-quinone oxidoreductase subunit N 1 (471 aa).

Helical transmembrane passes span 11–31 (ALVP…AGAW), 39–59 (TIHV…ALAA), 81–101 (AIVL…VAGH), 105–125 (TEFV…AGAG), 127–147 (LIML…LAGW), 162–182 (LAGA…FGVA), 200–220 (AAAA…AGAV), 234–254 (PPPV…VAFY), 270–290 (LITA…AFAQ), 296–316 (MLGY…AVAG), 324–344 (ALLL…AVVA), 365–385 (ALAL…AVFV), 398–418 (GLAW…FYYL), and 444–464 (AVAL…GIVL).

The protein belongs to the complex I subunit 2 family. As to quaternary structure, NDH-1 is composed of 14 different subunits. Subunits NuoA, H, J, K, L, M, N constitute the membrane sector of the complex.

It is found in the cell membrane. It carries out the reaction a quinone + NADH + 5 H(+)(in) = a quinol + NAD(+) + 4 H(+)(out). Its function is as follows. NDH-1 shuttles electrons from NADH, via FMN and iron-sulfur (Fe-S) centers, to quinones in the respiratory chain. The immediate electron acceptor for the enzyme in this species is believed to be a menaquinone. Couples the redox reaction to proton translocation (for every two electrons transferred, four hydrogen ions are translocated across the cytoplasmic membrane), and thus conserves the redox energy in a proton gradient. This Streptomyces griseus subsp. griseus (strain JCM 4626 / CBS 651.72 / NBRC 13350 / KCC S-0626 / ISP 5235) protein is NADH-quinone oxidoreductase subunit N 1.